The chain runs to 418 residues: Deubiquitinase and deneddylase Dub1 (418 aa).

The span at 1–10 (MLSPTNSISK) shows a compositional bias: polar residues. Residues 1 to 23 (MLSPTNSISKTVPAPPQDSSKPV) are disordered. The helical transmembrane segment at 40 to 60 (TALAVLLVVVTLGLILLFYSF) threads the bilayer. Residues 75–145 (STKEHPTISI…LPPKAPKPVK (71 aa)) form a disordered region. The segment covering 86–141 (EPLPSPPLAVPRPSTPPPPVISRPSTPPAPTPAISPPSTPSAPKPSTPPPLPPKAP) has biased composition (pro residues). Residues H288, D305, and C358 contribute to the active site.

The protein belongs to the peptidase C48 family.

It is found in the secreted. The protein resides in the host cell. The protein localises to the membrane. Functionally, effector proteins function to alter host cell physiology and promote bacterial survival in host tissues. This protease possesses deubiquitinating and deneddylating activities. This is Deubiquitinase and deneddylase Dub1 (cdu1) from Chlamydia trachomatis serovar A (strain ATCC VR-571B / DSM 19440 / HAR-13).